The primary structure comprises 976 residues: Ubiquitin ligase-binding protein BUL1 (976 aa).

The segment at 1-65 (MAKDLNDSGF…SPSLHSPKSW (65 aa)) is disordered. The segment covering 23-39 (SDFTANSSTTMNVNANT) has biased composition (polar residues). Low complexity predominate over residues 53–64 (SSRSPSLHSPKS). A phosphoserine mark is found at serine 58 and serine 70. Disordered regions lie at residues 82 to 124 (LAHS…DGDI), 145 to 196 (PQGN…SSST), and 857 to 878 (SEDS…ASLT). A PY-motif motif is present at residues 156-160 (FPPSY). The span at 163–176 (ANNSTATGAAGSSA) shows a compositional bias: low complexity. The segment covering 177–196 (DLSHQSLSTDALGATRSSST) has biased composition (polar residues). The segment covering 862–878 (SHTGNGSSSSPSSASLT) has biased composition (low complexity).

The protein belongs to the BUL1 family. In terms of assembly, component of the RSP5-BUL1/2 ubiquitin ligase complex composed of at least RSP5 and BUL1 or BUL2.

The protein localises to the cytoplasm. It participates in protein modification; protein ubiquitination. In terms of biological role, component of a RSP5 ubiquitin ligase complex which specifies polyubiquitination and intracellular trafficking of the general amino acid permease GAP1 as well as other permeases such as PMA1. The RSP5-BUL1/2 complex is also necessary for the heat-shock element (HSE)-mediated gene expression, nitrogen starvation GLN3-dependent transcription and pressure-induced differential regulation of the 2 tryptophan permeases TAT1 and TAT2. The chain is Ubiquitin ligase-binding protein BUL1 (BUL1) from Saccharomyces cerevisiae (strain ATCC 204508 / S288c) (Baker's yeast).